The primary structure comprises 533 residues: Inositol-3-phosphate synthase (533 aa).

At T48 the chain carries Phosphothreonine. G74, G75, N76, N77, and D148 together coordinate NAD(+). Phosphoserine occurs at positions 177 and 184. Residues S184, I185, Q195, D196, R198, T244, A245, N246, T247, G295, S296, D320, L321, S323, N354, N355, and D356 each contribute to the NAD(+) site. S296 bears the Phosphoserine mark. Position 368 is a phosphoserine (S368). K369 is an NAD(+) binding site. S374 carries the post-translational modification Phosphoserine. NAD(+) contacts are provided by G409, D410, D438, and S439.

It belongs to the myo-inositol 1-phosphate synthase family. In terms of assembly, homotetramer. Requires NAD(+) as cofactor. Phosphorylation at Ser-184 and Ser-374 is associated with a decrease in activity. Increasingly phosphorylated in presence of valproate.

The protein resides in the cytoplasm. It carries out the reaction D-glucose 6-phosphate = 1D-myo-inositol 3-phosphate. It functions in the pathway polyol metabolism; myo-inositol biosynthesis; myo-inositol from D-glucose 6-phosphate: step 1/2. Its activity is regulated as follows. Competitively inhibited by myo-2-inosose 1-phosphate, which is also an intermediate in the catalytic reaction. Competitively inhibited by 2-deoxy-myo-inositol 1-phosphate (dMIP), 1-deoxy-1-(phosphonomethyl)-myo-2-inosose (DPMI), dihydroxyacetone phosphate (DHAP), 6-deoxy-D-glucose 6-(E)-vinylhomophosphonate, 6-deoxy-D-glucitol 6-(E)-vinylhomophosphonate, 2,6-dideoxy-D-glucose 6-(E)-vinylhomophosphonate and 2,6-dideoxy-D-glucitol 6-(E)-vinylhomophosphonate. Inhibited by 2-deoxyglucitol 6-phosphate (dgtolP). Its function is as follows. Key enzyme in myo-inositol biosynthesis pathway that catalyzes the conversion of glucose 6-phosphate to 1-myo-inositol 1-phosphate in a NAD-dependent manner. Rate-limiting enzyme in the synthesis of all inositol-containing compounds. This chain is Inositol-3-phosphate synthase (INO1), found in Saccharomyces cerevisiae (strain ATCC 204508 / S288c) (Baker's yeast).